The sequence spans 513 residues: MQLNPSEISELIKSRIQGLEASADVRNQGTVISVTDGIVRIHGLSDVMQGEMLEFPGNTFGLALNLERDSVGAVILGEYEHISEGDVVKTTGRILEVPVGPELVGRVVDALGNPIDGKGPVNAKLTDAIEKIAPGVIWRKSVSQPVQTGIKSIDAMVPIGRGQRELIIGDRQCGKTAVAIDAIINQKGKDLVCIYVAIGQKASSIMNVVRKLEETGAMEYTIVVAASASDSAAMQYLAPYAGCTMGEYFRDRGQDALIIYDDLTKQAWAYRQISLLLRRPPGREAYPGDVFYLHSRLLERAARVSEEYVEKFTNGEVKGKSGSLTALPVIETQAGDVTAFVPTNVISITDGQIFLETDLFNAGIRPAINAGVSVSRVGGAAQTKVVKKLSGGIRTDLAQYRELAAFAQFASDLDEATRKQLERGRRVTELLKQPQYQPLQVWELAVSLYAANNGYLDDLDVKQVLPFEKGLRDNLKTSHADLIKRIEDTKDLSKDDEGALRAAIESFKKSGAY.

169–176 contributes to the ATP binding site; sequence GDRQCGKT.

This sequence belongs to the ATPase alpha/beta chains family. F-type ATPases have 2 components, CF(1) - the catalytic core - and CF(0) - the membrane proton channel. CF(1) has five subunits: alpha(3), beta(3), gamma(1), delta(1), epsilon(1). CF(0) has three main subunits: a(1), b(2) and c(9-12). The alpha and beta chains form an alternating ring which encloses part of the gamma chain. CF(1) is attached to CF(0) by a central stalk formed by the gamma and epsilon chains, while a peripheral stalk is formed by the delta and b chains.

The protein resides in the cell inner membrane. The catalysed reaction is ATP + H2O + 4 H(+)(in) = ADP + phosphate + 5 H(+)(out). Functionally, produces ATP from ADP in the presence of a proton gradient across the membrane. The alpha chain is a regulatory subunit. The sequence is that of ATP synthase subunit alpha from Burkholderia ambifaria (strain MC40-6).